The sequence spans 177 residues: Translationally-controlled tumor protein homolog (177 aa).

Residues 1 to 177 (MIIYRDLFSG…IKQGLVVEKC (177 aa)) enclose the TCTP domain.

It belongs to the TCTP family.

The protein resides in the cytoplasm. In terms of biological role, involved in calcium binding and microtubule stabilization. This chain is Translationally-controlled tumor protein homolog, found in Trichinella pseudospiralis (Parasitic roundworm).